Here is a 558-residue protein sequence, read N- to C-terminus: Glypican-1 (558 aa).

The first 23 residues, 1-23 (MELRARGWWLLCAAAALVACTRG), serve as a signal peptide directing secretion. Disulfide bonds link cysteine 32/cysteine 68, cysteine 62/cysteine 256, cysteine 69/cysteine 259, cysteine 191/cysteine 343, cysteine 246/cysteine 279, cysteine 268/cysteine 415, and cysteine 272/cysteine 401. N-linked (GlcNAc...) asparagine glycans are attached at residues asparagine 79 and asparagine 116. The disordered stretch occupies residues 478–531 (FQDASDDGSGSGSGGGCPDDACGRRVSKKSSSSRTPLIHALPGLSEQEGQKTSA). Serine 486, serine 488, and serine 490 each carry an O-linked (Xyl...) (heparan sulfate) serine glycan. A lipid anchor (GPI-anchor amidated serine) is attached at serine 530. A propeptide spans 531–558 (AATRPEPHYFFLLFLFTLVLAAARPRWR) (removed in mature form).

This sequence belongs to the glypican family. S-nitrosylated in a Cu(2+)-dependent manner. Nitric acid (NO) is released from the nitrosylated cysteines by ascorbate or by some other reducing agent, in a Cu(2+) or Zn(2+) dependent manner. This free nitric oxide is then capable of cleaving the heparan sulfate side chains. Post-translationally, N- and O-glycosylated. N-glycosylation is mainly of the complex type containing sialic acid. O-glycosylated with heparan sulfate. The heparan sulfate chains can be cleaved either by the action of heparanase or, degraded by a deaminative process that uses nitric oxide (NO) released from the S-nitrosylated cysteines. This process is triggered by ascorbate, or by some other reducing agent, in a Cu(2+)- or Zn(2+) dependent manner. Cu(2+) ions are provided by ceruloproteins such as APP, PRNP or CP which associate with GCP1 in intracellular compartments or lipid rafts. In terms of processing, this cell-associated glypican is further processed to give rise to a medium-released species. In terms of tissue distribution, nervous system.

Its subcellular location is the cell membrane. The protein localises to the endosome. It is found in the secreted. It localises to the extracellular space. In terms of biological role, cell surface proteoglycan that bears heparan sulfate. May act as a catalyst in increasing the rate of conversion of prion protein PRPN(C) to PRNP(Sc) via associating (via the heparan sulfate side chains) with both forms of PRPN, targeting them to lipid rafts and facilitating their interaction. Required for proper skeletal muscle differentiation by sequestering FGF2 in lipid rafts preventing its binding to receptors (FGFRs) and inhibiting the FGF-mediated signaling. Binds Cu(2+) or Zn(2+) ions. Binds, via the heparan sulfate side chains, alpha-4 (V) collagen and participates in Schwann cell myelination. The chain is Glypican-1 (Gpc1) from Rattus norvegicus (Rat).